Consider the following 2296-residue polypeptide: Protein Ycf2 (2296 aa).

An ATP-binding site is contributed by 1650 to 1657 (GSIGIGRS).

The protein belongs to the Ycf2 family.

It is found in the plastid. The protein resides in the chloroplast stroma. In terms of biological role, probable ATPase of unknown function. Its presence in a non-photosynthetic plant (Epifagus virginiana) and experiments in tobacco indicate that it has an essential function which is probably not related to photosynthesis. The protein is Protein Ycf2 of Arabis hirsuta (Hairy rock-cress).